A 1165-amino-acid chain; its full sequence is Activity-dependent neuroprotector homeobox protein 2 (1165 aa).

Residues 73–96 form a C2H2-type 1 zinc finger; sequence YCCSLCRYSTKVLTSLKNHLHRYH. The segment at 106-128 adopts a C2H2-type 2; degenerate zinc-finger fold; that stretch reads IPCPNCPFSSQPRVVGKHFRMFH. Lysine 146 participates in a covalent cross-link: Glycyl lysine isopeptide (Lys-Gly) (interchain with G-Cter in SUMO2). The C2H2-type 3; degenerate zinc finger occupies 155–178; sequence FTCLKCNFSNTLYYSMKKHVLVAH. The C2H2-type 4 zinc-finger motif lies at 215-240; it reads YYCKKCSAIASSQDALMYHILTSDAH. Positions 303-318 are enriched in low complexity; that stretch reads SGTVQSVTVTPGTSGS. The tract at residues 303–327 is disordered; the sequence is SGTVQSVTVTPGTSGSLTHSPPTTA. The segment at 696 to 718 adopts a C2H2-type 5; degenerate zinc-finger fold; it reads KTCPVCNELFPSNVYQVHMEVAH. A C2H2-type 6; degenerate zinc finger spans residues 724 to 746; that stretch reads QLCQVCNELFPANVYQVHMEVAH. Residues 777–798 form a C2H2-type 7; degenerate zinc finger; the sequence is VRCLSCKCLVSQEELMHHLLMH. C2H2-type zinc fingers lie at residues 800-823 and 905-935; these read LGCL…RTKH and LTCP…PTVH. The tract at residues 1005–1068 is disordered; the sequence is PVKRKLPEGH…SGPSEDSLQA (64 aa). Glycyl lysine isopeptide (Lys-Gly) (interchain with G-Cter in SUMO2) cross-links involve residues lysine 1009 and lysine 1048. Residues 1009–1024 show a composition bias toward basic and acidic residues; sequence KLPEGHLGPEDQRDGE. The homeobox DNA-binding region spans 1090-1132; that stretch reads DYFHRRPYPSRKEVELLSSLLWVWKIDVASFFGKRRYICMKAI.

The protein belongs to the krueppel C2H2-type zinc-finger protein family. As to quaternary structure, may interact with SMARCA4/BRG1. Expressed widely, with the highest level in the brain.

It localises to the nucleus. Its function is as follows. May be involved in transcriptional regulation. May play a role in neuronal function; perhaps involved in protection of brain tissues from oxidative stress. May be involved in erythroid differentiation. The chain is Activity-dependent neuroprotector homeobox protein 2 (Adnp2) from Mus musculus (Mouse).